A 397-amino-acid polypeptide reads, in one-letter code: Translocase of chloroplast 34 homolog, chloroplastic (397 aa).

The interval 1–72 (MAQPPRPAEE…SQPWAGLNRL (72 aa)) is disordered. Composition is skewed to acidic residues over residues 10-32 (EYDDDVQEDEDELKEGELDDDES) and 44-63 (AGDEEAEDDEQDEEDGDEDS). The region spanning 90–321 (RKQLTVLLLG…YKYHPRLSSK (232 aa)) is the AIG1-type G domain. The tract at residues 99–106 (GKSSVGKS) is G1. GTP-binding positions include 102–107 (SVGKSS) and 121–126 (QAFKLQ). Ser-106 is a binding site for Mg(2+). Positions 121-124 (QAFK) are homodimerization. The segment at 126-130 (QADTD) is G2. Residues 155–158 (DTCG) form a G3 region. Positions 193 to 198 (RLDLYR) are homodimerization. The interval 227–230 (THAN) is G4. GTP contacts are provided by residues His-228 and 271-272 (EN). The G5 stretch occupies residues 271 to 273 (ENS). The chain crosses the membrane as a helical span at residues 329 to 349 (LLPVAIAAEVLFYRRFLHPRL). The AKR2A-binding sequence (ABS) required for chloroplast outer envelope membrane targeting motif lies at 350–358 (DDNQRRVER).

The protein belongs to the TRAFAC class TrmE-Era-EngA-EngB-Septin-like GTPase superfamily. AIG1/Toc34/Toc159-like paraseptin GTPase family. TOC34 subfamily. In terms of assembly, homodimer, heterodimer with other TOC proteins, and monomer. Part of the TOC core complex that includes 1 protein for the specific recognition of transit peptides surrounded by a ring composed of four proteins forming translocation channels, and four to five GTP-binding proteins providing energy. This core complex can interact with components of the TIC complex to form a larger import complex. Interacts with ARSA1. It depends on Mg(2+) as a cofactor.

It is found in the plastid. Its subcellular location is the chloroplast outer membrane. In terms of biological role, GTPase involved in protein precursor import into chloroplasts. Seems to recognize chloroplast-destined precursor proteins and regulate their presentation to the translocation channel through GTP hydrolysis. Functions as an essential component of the outer chloroplast membrane translocon (TOC) complex, which, in turn, catalyzes the import of nucleus-encoded precursor polypeptides from the cytoplasm to the chloroplast. In Chlamydomonas reinhardtii (Chlamydomonas smithii), this protein is Translocase of chloroplast 34 homolog, chloroplastic.